The following is a 358-amino-acid chain: Triacylglycerol lipase (358 aa).

The N-terminal stretch at 1–39 (MVRSMRSRVAARAVAWALAVMPLAGAAGLTMAASPAAVA) is a signal peptide. Residues 48-327 (YPVILVHGLA…TSYHWNHLDE (280 aa)) form the AB hydrolase-1 domain. Leu-56 is a substrate binding site. Ser-126 functions as the Nucleophile in the catalytic mechanism. Gln-127 contributes to the substrate binding site. Cys-229 and Cys-308 are joined by a disulfide. Asp-280 is a Ca(2+) binding site. Active-site charge relay system residues include Asp-302 and His-324. 3 residues coordinate Ca(2+): Asp-326, Gln-330, and Val-334.

Belongs to the AB hydrolase superfamily. Pseudomonas lipase family. Monomer. Interacts with lipase-specific foldase Lif. Ca(2+) is required as a cofactor.

Its subcellular location is the secreted. The enzyme catalyses a triacylglycerol + H2O = a diacylglycerol + a fatty acid + H(+). Catalyzes the hydrolysis of triacylglycerol. This Burkholderia plantarii protein is Triacylglycerol lipase.